The chain runs to 219 residues: Redox-sensing transcriptional repressor Rex (219 aa).

A DNA-binding region (H-T-H motif) is located at residues 17–56 (VYLRVLDNLVKRDIEVVSSKSLSKETGFTAEQIRKDLAFF). Residue 91 to 96 (GAGHLG) coordinates NAD(+).

It belongs to the transcriptional regulatory Rex family. As to quaternary structure, homodimer.

The protein resides in the cytoplasm. Modulates transcription in response to changes in cellular NADH/NAD(+) redox state. In Natranaerobius thermophilus (strain ATCC BAA-1301 / DSM 18059 / JW/NM-WN-LF), this protein is Redox-sensing transcriptional repressor Rex.